We begin with the raw amino-acid sequence, 256 residues long: Necrosis-inducing protein NPP1 (256 aa).

The Conserved undecapeptide motif signature appears at 111-121 (AIMYAWYFPKG). A Conserved heptapeptide motif motif is present at residues 133 to 139 (GHRHEWE).

This sequence belongs to the Necrosis inducing protein (NPP1) family.

Its subcellular location is the secreted. Functionally, secreted effector that acts as a pathogen-associated molecular pattern (PAMP) recognized by the plant immune system. The sequence is that of Necrosis-inducing protein NPP1 from Phytophthora cinnamomi (Cinnamon fungus).